The following is a 429-amino-acid chain: Phosphoribosylamine--glycine ligase (429 aa).

The region spanning 109-316 is the ATP-grasp domain; that stretch reads KDFLARHNIP…LVELCLAACE (208 aa). ATP is bound at residue 135-196; the sequence is LREKGAPIVI…EEFLDGEEAS (62 aa). The interval 212-237 is disordered; sequence SQDHKRVGDKDTGPNTGGMGAYSPAP. The segment covering 213–223 has biased composition (basic and acidic residues); sequence QDHKRVGDKDT. Residues Glu-286 and Asn-288 each coordinate Mg(2+).

The protein belongs to the GARS family. As to quaternary structure, monomer. It depends on Mg(2+) as a cofactor. Mn(2+) serves as cofactor.

The catalysed reaction is 5-phospho-beta-D-ribosylamine + glycine + ATP = N(1)-(5-phospho-beta-D-ribosyl)glycinamide + ADP + phosphate + H(+). It functions in the pathway purine metabolism; IMP biosynthesis via de novo pathway; N(1)-(5-phospho-D-ribosyl)glycinamide from 5-phospho-alpha-D-ribose 1-diphosphate: step 2/2. This Escherichia coli O157:H7 protein is Phosphoribosylamine--glycine ligase.